Consider the following 323-residue polypeptide: Lipid A biosynthesis acyltransferase 1 (323 aa).

A helical membrane pass occupies residues 23 to 43; that stretch reads YWGAWLGVAAMAGIALTPPKF. The HXXXXD motif signature appears at 139–144; that stretch reads HGWAVD.

The protein belongs to the LpxL/LpxM/LpxP family. LpxM subfamily.

The protein localises to the cell inner membrane. The catalysed reaction is an alpha-Kdo-(2-&gt;4)-alpha-Kdo-(2-&gt;6)-(acyl)-lipid IVA + a fatty acyl-[ACP] = an alpha-Kdo-(2-&gt;4)-alpha-Kdo-(2-&gt;6)-lipid A + holo-[ACP]. It functions in the pathway glycolipid biosynthesis; KDO(2)-lipid A biosynthesis; KDO(2)-lipid A from CMP-3-deoxy-D-manno-octulosonate and lipid IV(A): step 4/4. It participates in bacterial outer membrane biogenesis; lipopolysaccharide biosynthesis. Its function is as follows. Catalyzes the transfer of an acyl chain from an acyl-[acyl-carrier-protein] (ACP) to a Kdo(2)-(acyl)-lipid IV(A) to form a Kdo(2)-lipid A. This is Lipid A biosynthesis acyltransferase 1 from Shigella flexneri.